The chain runs to 457 residues: Argininosuccinate lyase (457 aa).

Belongs to the lyase 1 family. Argininosuccinate lyase subfamily.

It is found in the cytoplasm. It carries out the reaction 2-(N(omega)-L-arginino)succinate = fumarate + L-arginine. It functions in the pathway amino-acid biosynthesis; L-arginine biosynthesis; L-arginine from L-ornithine and carbamoyl phosphate: step 3/3. In Psychrobacter arcticus (strain DSM 17307 / VKM B-2377 / 273-4), this protein is Argininosuccinate lyase.